The following is a 199-amino-acid chain: Prolactin-1 (199 aa).

3 disulfide bridges follow: cysteine 4/cysteine 11, cysteine 58/cysteine 174, and cysteine 191/cysteine 199. An N-linked (GlcNAc...) asparagine glycan is attached at asparagine 60.

The protein belongs to the somatotropin/prolactin family. Post-translationally, glycosylated.

The protein resides in the secreted. The protein is Prolactin-1 of Alligator mississippiensis (American alligator).